A 739-amino-acid chain; its full sequence is Catalase-peroxidase 2 (739 aa).

The N-terminal stretch at 1 to 26 is a signal peptide; it reads MKKSTIPSMSALTLAMSLAFGGAAIA. Positions 105-227 form a cross-link, tryptophyl-tyrosyl-methioninium (Trp-Tyr) (with M-253); that stretch reads WHSAGVYRIF…MGATQMGLIY (123 aa). The active-site Proton acceptor is the H106. Positions 227–253 form a cross-link, tryptophyl-tyrosyl-methioninium (Tyr-Met) (with W-105); that stretch reads YVNPEGPNGVPDPLASAKEIRDTFGRM. Position 268 (H268) interacts with heme b.

The protein belongs to the peroxidase family. Peroxidase/catalase subfamily. Homodimer or homotetramer. The cofactor is heme b. Formation of the three residue Trp-Tyr-Met cross-link is important for the catalase, but not the peroxidase activity of the enzyme.

The enzyme catalyses H2O2 + AH2 = A + 2 H2O. It carries out the reaction 2 H2O2 = O2 + 2 H2O. Functionally, bifunctional enzyme with both catalase and broad-spectrum peroxidase activity. The polypeptide is Catalase-peroxidase 2 (Shewanella sp. (strain ANA-3)).